The chain runs to 157 residues: MTHSYGYRRQTRKKFAKAYKTKGHVRISRYLTTYKVGEYVDIMVDGSQHKGMPYKLYHGRTGKVFNVNPRSIGVIVHRIVNGRYIEKRLHVKIEHVRPSNVKTALSKRYQANDQAKAEGNKAGKRVSTKRNPGQPLEAVQVQGAVNFQHPKVFREIF.

The tract at residues 110-132 (QANDQAKAEGNKAGKRVSTKRNP) is disordered.

The protein belongs to the eukaryotic ribosomal protein eL21 family.

In Tetrahymena thermophila (strain SB210), this protein is Large ribosomal subunit protein eL21 (RPL21).